A 41-amino-acid chain; its full sequence is Antimicrobial protein PN-AMP1 (41 aa).

The residue at position 1 (Gln1) is a Pyrrolidone carboxylic acid. The Chitin-binding type-1 domain occupies 1-41 (QQCGRQASGRLCGNRLCCSQWGYCGSTASYCGAGCQSQCRS). 4 cysteine pairs are disulfide-bonded: Cys3-Cys18, Cys12-Cys24, Cys17-Cys31, and Cys35-Cys39.

Functionally, chitin-binding protein with a defensive function against numerous chitin containing fungal pathogens. It is also an inhibitor of Gram-positive bacteria such as B.subtilis. The sequence is that of Antimicrobial protein PN-AMP1 from Ipomoea nil (Japanese morning glory).